Reading from the N-terminus, the 90-residue chain is YcgL domain-containing protein YE2368 (90 aa).

Positions 1–85 (MLCAIYRSPK…PPESLLKMHL (85 aa)) constitute a YcgL domain.

The chain is YcgL domain-containing protein YE2368 from Yersinia enterocolitica serotype O:8 / biotype 1B (strain NCTC 13174 / 8081).